We begin with the raw amino-acid sequence, 447 residues long: 2-oxoadipate dioxygenase/decarboxylase (447 aa).

2-oxoadipate is bound by residues His68, Arg72, and His224. A Fe(2+)-binding site is contributed by His68. The Fe(2+) site is built by His224 and Glu290. Residue Val391 coordinates 2-oxoadipate.

Belongs to the 2-oxoadipate dioxygenase/decarboxylase family. Fe(2+) serves as cofactor.

It carries out the reaction 2-oxoadipate + O2 = (R)-2-hydroxyglutarate + CO2. In terms of biological role, catalyzes the decarboxylation and hydroxylation of 2-oxoadipate (2OA) to form D-2-hydroxyglutarate (D-2-HGA). The protein is 2-oxoadipate dioxygenase/decarboxylase (ydcJ) of Escherichia coli (strain K12).